Here is a 182-residue protein sequence, read N- to C-terminus: Vacuolar protein sorting-associated protein 29 (182 aa).

Zn(2+) is bound by residues D8, H10, and N39. N6-acetyllysine is present on K50. Zn(2+)-binding residues include D62, H86, H115, and H117.

The protein belongs to the VPS29 family. Component of the commander complex consisting of the CCC subcomplex and the retriever subcomplex. Component of the heterotrimeric retriever complex formed by VPS26C, VPS29 and VPS35L; within the complex interacts with VPS35L. Component of the heterotrimeric retromer cargo-selective complex (CSC), also described as vacuolar protein sorting subcomplex (VPS), formed by VPS26 (VPS26A or VPS26B), VPS29 and VPS35. The CSC has a highly elongated structure with VPS26 and VPS29 binding independently at opposite distal ends of VPS35 as central platform. The CSC is believed to associate with variable sorting nexins to form functionally distinct retromer complex variants. The originally described retromer complex (also called SNX-BAR retromer) is a pentamer containing the CSC and a heterodimeric membrane-deforming subcomplex formed between SNX1 or SNX2 and SNX5 or SNX6 (also called SNX-BAR subcomplex); the respective CSC and SNX-BAR subcomplexes associate with low affinity. The CSC associates with SNX3 to form a SNX3-retromer complex. The CSC associates with SNX27, the WASH complex and the SNX-BAR subcomplex to form the SNX27-retromer complex. Interacts with VPS26A, VPS35, SNX1, SNX2, SNX3, SNX27, WASHC5. Interacts with TBC1D5; this interaction is blocked by VPS35L in the retriever complex. Interacts with SNX17; the interaction is indirect; SNX17 (via its C-terminus) interacts with the retriever complex (via VPS26C and VPS35L). Interacts with VPS26B and ANKRD27. As to quaternary structure, (Microbial infection) Interacts with human papillomavirus 16 minor capsid protein L2 (via C-terminus); this interaction mediates the transport of the capsid from the early endosome to the Golgi apparatus. In terms of tissue distribution, ubiquitous. Highly expressed in heart, lung, placenta, spleen, peripheral blood leukocytes, thymus, colon skeletal muscle, kidney and brain.

The protein localises to the cytoplasm. It is found in the membrane. The protein resides in the endosome membrane. Its subcellular location is the early endosome. It localises to the late endosome. Component of the commander complex that is essential for endosomal recycling of transmembrane cargos; the commander complex is composed of the CCC subcomplex and the retriever subcomplex. Component of the retriever complex, which is a heterotrimeric complex related to retromer cargo-selective complex (CSC) and essential for retromer-independent retrieval and recycling of numerous cargos such as integrin alpha-5/beta-1 (ITGA5:ITGB1). Component of the retromer cargo-selective complex (CSC). The CSC is believed to be the core functional component of retromer or respective retromer complex variants acting to prevent missorting of selected transmembrane cargo proteins into the lysosomal degradation pathway. The recruitment of the CSC to the endosomal membrane involves RAB7A and SNX3. The SNX-BAR retromer mediates retrograde transport of cargo proteins from endosomes to the trans-Golgi network (TGN) and is involved in endosome-to-plasma membrane transport for cargo protein recycling. The SNX3-retromer mediates the retrograde endosome-to-TGN transport of WLS distinct from the SNX-BAR retromer pathway. The SNX27-retromer is believed to be involved in endosome-to-plasma membrane trafficking and recycling of a broad spectrum of cargo proteins. The CSC seems to act as recruitment hub for other proteins, such as the WASH complex and TBC1D5. Required to regulate transcytosis of the polymeric immunoglobulin receptor (pIgR-pIgA). In the endosomes, retriever complex drives the retrieval and recycling of NxxY-motif-containing cargo proteins by coupling to SNX17, a cargo essential for the homeostatic maintenance of numerous cell surface proteins associated with processes that include cell migration, cell adhesion, nutrient supply and cell signaling. The recruitment of the retriever complex to the endosomal membrane involves CCC and WASH complexes. Involved in GLUT1 endosome-to-plasma membrane trafficking; the function is dependent of association with ANKRD27. Its function is as follows. (Microbial infection) The heterotrimeric retromer cargo-selective complex (CSC) mediates the exit of human papillomavirus from the early endosome and the delivery to the Golgi apparatus. The sequence is that of Vacuolar protein sorting-associated protein 29 from Homo sapiens (Human).